Consider the following 295-residue polypeptide: Ribosomal protein L11 methyltransferase (295 aa).

Positions 146, 167, 189, and 231 each coordinate S-adenosyl-L-methionine.

Belongs to the methyltransferase superfamily. PrmA family.

It is found in the cytoplasm. It catalyses the reaction L-lysyl-[protein] + 3 S-adenosyl-L-methionine = N(6),N(6),N(6)-trimethyl-L-lysyl-[protein] + 3 S-adenosyl-L-homocysteine + 3 H(+). Methylates ribosomal protein L11. The protein is Ribosomal protein L11 methyltransferase of Vibrio vulnificus (strain YJ016).